Consider the following 323-residue polypeptide: Aspartate carbamoyltransferase catalytic subunit (323 aa).

Carbamoyl phosphate contacts are provided by R71 and T72. K99 serves as a coordination point for L-aspartate. Positions 121, 151, and 154 each coordinate carbamoyl phosphate. The L-aspartate site is built by R184 and R239. G280 and P281 together coordinate carbamoyl phosphate.

The protein belongs to the aspartate/ornithine carbamoyltransferase superfamily. ATCase family. Heterododecamer (2C3:3R2) of six catalytic PyrB chains organized as two trimers (C3), and six regulatory PyrI chains organized as three dimers (R2).

It catalyses the reaction carbamoyl phosphate + L-aspartate = N-carbamoyl-L-aspartate + phosphate + H(+). The protein operates within pyrimidine metabolism; UMP biosynthesis via de novo pathway; (S)-dihydroorotate from bicarbonate: step 2/3. Its function is as follows. Catalyzes the condensation of carbamoyl phosphate and aspartate to form carbamoyl aspartate and inorganic phosphate, the committed step in the de novo pyrimidine nucleotide biosynthesis pathway. The polypeptide is Aspartate carbamoyltransferase catalytic subunit (Cupriavidus taiwanensis (strain DSM 17343 / BCRC 17206 / CCUG 44338 / CIP 107171 / LMG 19424 / R1) (Ralstonia taiwanensis (strain LMG 19424))).